A 908-amino-acid polypeptide reads, in one-letter code: 3-phosphoinositide-dependent protein kinase B (908 aa).

Low complexity-rich tracts occupy residues 53–170 (NNNF…SSSL), 179–189 (YSDSSDSIDSY), and 200–216 (QQQQ…QPLH). The interval 53-267 (NNNFNNNNNN…PNSSIPHKKS (215 aa)) is disordered. A compositionally biased stretch (polar residues) spans 250-262 (KTSSFGLQPNSSI). Positions 271–527 (FDFIRTIGKG…ISEIKNHEFF (257 aa)) constitute a Protein kinase domain. ATP is bound by residues 281–283 (AYG) and K300. Residues 302–346 (LNKKLIIKEKKAKYVNTEKTILDSLDNPNIVKLFYTFQDENNLYF) are PIF-pocket. Residues 349-351 (EYC) and D355 contribute to the ATP site. D394 (proton acceptor) is an active-site residue. Residues E398 and D412 each coordinate ATP. Disordered stretches follow at residues 538-560 (SQTP…NSSL) and 606-755 (ISNN…KNLQ). The segment covering 607–684 (SNNNNNNNNT…PAYSSTPSST (78 aa)) has biased composition (low complexity). The segment covering 696–709 (SSCSSNNLLGKSSN) has biased composition (polar residues). Over residues 710-741 (QQYQPFQFHQQQQQQQQQQQRERSSTTTPSPT) the composition is skewed to low complexity. One can recognise a PH domain in the interval 764–902 (SSFSTSSPMS…KLWVDLINEL (139 aa)).

The protein belongs to the protein kinase superfamily. AGC Ser/Thr protein kinase family. PDPK1 subfamily.

It catalyses the reaction L-seryl-[protein] + ATP = O-phospho-L-seryl-[protein] + ADP + H(+). The catalysed reaction is L-threonyl-[protein] + ATP = O-phospho-L-threonyl-[protein] + ADP + H(+). This chain is 3-phosphoinositide-dependent protein kinase B (pdkB), found in Dictyostelium discoideum (Social amoeba).